The sequence spans 289 residues: Protease HtpX homolog (289 aa).

The next 2 helical transmembrane spans lie at 11-31 (AALFGVLWAVLLALGALIGAG) and 36-54 (APIWIMALVGVGTTFYGYW). Zn(2+) is bound at residue histidine 138. Residue glutamate 139 is part of the active site. A Zn(2+)-binding site is contributed by histidine 142. Helical transmembrane passes span 153–173 (VAAAVAGVITSVGQMLLFFGG) and 182–202 (LAMIAMALLAPFAASLIQMAI). Glutamate 207 contributes to the Zn(2+) binding site.

It belongs to the peptidase M48B family. Zn(2+) serves as cofactor.

The protein localises to the cell membrane. The protein is Protease HtpX homolog of Pseudarthrobacter chlorophenolicus (strain ATCC 700700 / DSM 12829 / CIP 107037 / JCM 12360 / KCTC 9906 / NCIMB 13794 / A6) (Arthrobacter chlorophenolicus).